The primary structure comprises 192 residues: Ribosomal RNA large subunit methyltransferase E (192 aa).

Glycine 48, phenylalanine 50, aspartate 67, aspartate 85, and aspartate 107 together coordinate S-adenosyl-L-methionine. Residue lysine 147 is the Proton acceptor of the active site.

Belongs to the class I-like SAM-binding methyltransferase superfamily. RNA methyltransferase RlmE family.

It localises to the cytoplasm. The enzyme catalyses uridine(2552) in 23S rRNA + S-adenosyl-L-methionine = 2'-O-methyluridine(2552) in 23S rRNA + S-adenosyl-L-homocysteine + H(+). Functionally, specifically methylates the uridine in position 2552 of 23S rRNA at the 2'-O position of the ribose in the fully assembled 50S ribosomal subunit. This is Ribosomal RNA large subunit methyltransferase E from Borrelia garinii subsp. bavariensis (strain ATCC BAA-2496 / DSM 23469 / PBi) (Borreliella bavariensis).